The following is a 414-amino-acid chain: Translation initiation factor 2 subunit gamma (414 aa).

The tr-type G domain occupies 8-206; the sequence is QPEVNIGVVG…AIEKFIPTPP (199 aa). Residues 17–24 form a G1 region; that stretch reads GHVDHGKT. Positions 20, 24, 45, and 47 each coordinate Mg(2+). 20-25 contacts GTP; the sequence is DHGKTT. The interval 45-49 is G2; sequence GMTIK. The Zn(2+) site is built by cysteine 60, cysteine 63, cysteine 75, and cysteine 77. The interval 93 to 96 is G3; it reads DAPG. GTP-binding positions include 149–152 and 184–186; these read NKVD and SAL. A G4 region spans residues 149-152; that stretch reads NKVD. Residues 184 to 186 are G5; the sequence is SAL.

It belongs to the TRAFAC class translation factor GTPase superfamily. Classic translation factor GTPase family. EIF2G subfamily. In terms of assembly, heterotrimer composed of an alpha, a beta and a gamma chain. The cofactor is Mg(2+).

The enzyme catalyses GTP + H2O = GDP + phosphate + H(+). Functionally, eIF-2 functions in the early steps of protein synthesis by forming a ternary complex with GTP and initiator tRNA. This chain is Translation initiation factor 2 subunit gamma, found in Aeropyrum pernix (strain ATCC 700893 / DSM 11879 / JCM 9820 / NBRC 100138 / K1).